Consider the following 414-residue polypeptide: Thyroid hormone receptor beta-B (414 aa).

Residues 1–59 (MPSSMSVRLFTASAAQRKKIQEGDCCVVLAGKTQGRFILIGAVARVSGYIPSYLDKDEL) form a modulating region. 2 NR C4-type zinc fingers span residues 60 to 80 (CVVCGDKATGYHYRCITCEGC) and 98 to 122 (CKYEGKCVIDKVTRNQCQECRFKKC). The segment at residues 60 to 134 (CVVCGDKATG…VGMATDLVLD (75 aa)) is a DNA-binding region (nuclear receptor). Residues 170–414 (EEWELIQVVT…PPLFLEVFED (245 aa)) form the NR LBD domain.

The protein belongs to the nuclear hormone receptor family. NR1 subfamily.

It localises to the nucleus. In terms of biological role, high affinity receptor for triiodothyronine (T3). The protein is Thyroid hormone receptor beta-B (thrb-b) of Xenopus laevis (African clawed frog).